Here is a 223-residue protein sequence, read N- to C-terminus: Flagellar L-ring protein 2 (223 aa).

A signal peptide spans 1–17 (MKWLSKSWAVAVVLLVG). Residue Cys-18 is the site of N-palmitoyl cysteine attachment. The S-diacylglycerol cysteine moiety is linked to residue Cys-18.

It belongs to the FlgH family. As to quaternary structure, the basal body constitutes a major portion of the flagellar organelle and consists of four rings (L,P,S, and M) mounted on a central rod.

It is found in the cell outer membrane. It localises to the bacterial flagellum basal body. Assembles around the rod to form the L-ring and probably protects the motor/basal body from shearing forces during rotation. The chain is Flagellar L-ring protein 2 from Vibrio parahaemolyticus serotype O3:K6 (strain RIMD 2210633).